The primary structure comprises 525 residues: 2-isopropylmalate synthase (525 aa).

Residues 5 to 267 form the Pyruvate carboxyltransferase domain; that stretch reads VIIFDTTLRD…HTGIHHQEIY (263 aa). The Mn(2+) site is built by D14, H202, H204, and N238. A regulatory domain region spans residues 392–525; it reads RLEYFSVQSS…NNSQDMQETV (134 aa).

Belongs to the alpha-IPM synthase/homocitrate synthase family. LeuA type 1 subfamily. As to quaternary structure, homodimer. It depends on Mn(2+) as a cofactor.

Its subcellular location is the cytoplasm. It carries out the reaction 3-methyl-2-oxobutanoate + acetyl-CoA + H2O = (2S)-2-isopropylmalate + CoA + H(+). The protein operates within amino-acid biosynthesis; L-leucine biosynthesis; L-leucine from 3-methyl-2-oxobutanoate: step 1/4. Catalyzes the condensation of the acetyl group of acetyl-CoA with 3-methyl-2-oxobutanoate (2-ketoisovalerate) to form 3-carboxy-3-hydroxy-4-methylpentanoate (2-isopropylmalate). The protein is 2-isopropylmalate synthase of Sodalis glossinidius (strain morsitans).